We begin with the raw amino-acid sequence, 1201 residues long: uncharacterized protein (1201 aa).

A helical transmembrane segment spans residues 140 to 160 (IIINLIFFFAFIIVGIYLFKP). Coiled-coil stretches lie at residues 420 to 459 (QKKQ…AELN) and 536 to 574 (AIKA…ITKM).

It is found in the cell membrane. This is an uncharacterized protein from Bacillus subtilis (strain 168).